The sequence spans 380 residues: Geranylgeranyl pyrophosphate synthase cle6 (380 aa).

Residues 1 to 19 (MHSVRTSTTSTSSMVSSTM) are compositionally biased toward low complexity. Residues 1-55 (MHSVRTSTTSTSSMVSSTMHPFDAFNAPQPYQQHHPPRWNIHNPHFSQTNGHSIQ) are disordered. Residues 45–55 (HFSQTNGHSIQ) are compositionally biased toward polar residues. Positions 102, 105, and 134 each coordinate isopentenyl diphosphate. The Mg(2+) site is built by aspartate 141 and aspartate 145. Arginine 150 provides a ligand contact to dimethylallyl diphosphate. Arginine 151 provides a ligand contact to isopentenyl diphosphate. Residues lysine 229, threonine 230, and glutamine 263 each contribute to the dimethylallyl diphosphate site. Aspartate 266 provides a ligand contact to Mg(2+). Dimethylallyl diphosphate contacts are provided by asparagine 270, lysine 280, and lysine 290.

The protein belongs to the FPP/GGPP synthase family. It depends on Mg(2+) as a cofactor.

The enzyme catalyses isopentenyl diphosphate + dimethylallyl diphosphate = (2E)-geranyl diphosphate + diphosphate. The catalysed reaction is isopentenyl diphosphate + (2E)-geranyl diphosphate = (2E,6E)-farnesyl diphosphate + diphosphate. It carries out the reaction isopentenyl diphosphate + (2E,6E)-farnesyl diphosphate = (2E,6E,10E)-geranylgeranyl diphosphate + diphosphate. The protein operates within secondary metabolite biosynthesis; terpenoid biosynthesis. Its function is as follows. Geranylgeranyl pyrophosphate synthase; part of the cluster A that mediates the biosynthesis of chevalone E and its oxidized derivatives that possess a unique five-membered lactone ring and can synergistically enhance the cytotoxicity of doxorubicin (DOX) in breast cancer cells. Within the pathway, cle6 takes part to the biosynthesis of the molecular scaffold by providing geranylgeranyl pyrophosphate (GGPP) to the prenyltransferase cle5 for C-3 geranylgeranylation of triacetic acid lactone. The molecular scaffold is commonly biosynthesized by a series of enzymes including the non-reducing polyketide synthase (NR-PKS) cle1 that produces the alpha-pyrone triacetic acid lactone (TAL); The membrane-bound prenyltransferase cle5 that accepts TAL as its substrate to perform a C-3 geranylgeranylation reaction, in which the pathway-dedicated GGPS cle6 is required to provide GGPP, the other substrate of cle5; the FAD-dependent monooxygenase Cle3 that forms an (S)-epoxide ring at the terminal olefin of the geranylgeranyl group; and the terpene cyclase Cle7 that catalyzes the cyclization of the prenyl group that yields the pentacyclic pathway intermediate chevalone E. Chevalone E can derivatize into seven new oxidized analogs by the cytochrome P450 monooxygenases cle2 (acting at C-20) and cle4 (acting at C-11 and C-12). This Aspergillus versicolor protein is Geranylgeranyl pyrophosphate synthase cle6.